The primary structure comprises 488 residues: Homoserine O-acetyltransferase (488 aa).

Residues 47-355 enclose the AB hydrolase-1 domain; it reads NAILVCHALT…SYGHDAFLLE (309 aa). The Nucleophile role is filled by serine 153. Arginine 222 serves as a coordination point for substrate. Residues aspartate 316 and histidine 349 contribute to the active site. Aspartate 350 lines the substrate pocket. 2 CBS domains span residues 376–433 and 437–488; these read MTEK…CSKL and MTRD…RLIG.

The protein belongs to the AB hydrolase superfamily. MetX family. Homodimer.

It is found in the cytoplasm. The enzyme catalyses L-homoserine + acetyl-CoA = O-acetyl-L-homoserine + CoA. The protein operates within amino-acid biosynthesis; L-methionine biosynthesis via de novo pathway; O-acetyl-L-homoserine from L-homoserine: step 1/1. Transfers an acetyl group from acetyl-CoA to L-homoserine, forming acetyl-L-homoserine. This Methanococcoides burtonii (strain DSM 6242 / NBRC 107633 / OCM 468 / ACE-M) protein is Homoserine O-acetyltransferase.